We begin with the raw amino-acid sequence, 374 residues long: Chaperone protein DnaJ (374 aa).

Positions Asp-5 to Gly-70 constitute a J domain. The CR-type zinc finger occupies Gly-136–Glu-214. Residues Cys-149, Cys-152, Cys-166, Cys-169, Cys-188, Cys-191, Cys-202, and Cys-205 each contribute to the Zn(2+) site. 4 CXXCXGXG motif repeats span residues Cys-149–Gly-156, Cys-166–Gly-173, Cys-188–Gly-195, and Cys-202–Gly-209.

It belongs to the DnaJ family. In terms of assembly, homodimer. Requires Zn(2+) as cofactor.

It is found in the cytoplasm. Its function is as follows. Participates actively in the response to hyperosmotic and heat shock by preventing the aggregation of stress-denatured proteins and by disaggregating proteins, also in an autonomous, DnaK-independent fashion. Unfolded proteins bind initially to DnaJ; upon interaction with the DnaJ-bound protein, DnaK hydrolyzes its bound ATP, resulting in the formation of a stable complex. GrpE releases ADP from DnaK; ATP binding to DnaK triggers the release of the substrate protein, thus completing the reaction cycle. Several rounds of ATP-dependent interactions between DnaJ, DnaK and GrpE are required for fully efficient folding. Also involved, together with DnaK and GrpE, in the DNA replication of plasmids through activation of initiation proteins. The chain is Chaperone protein DnaJ from Wolbachia sp. subsp. Brugia malayi (strain TRS).